Consider the following 185-residue polypeptide: CD160 antigen (185 aa).

Residues Met1 to Gly27 form the signal peptide. The 109-residue stretch at Gly28–Thr136 folds into the Ig-like V-type domain. 2 disulfide bridges follow: Cys47-Cys115 and Cys64-Cys71. N-linked (GlcNAc...) asparagine glycosylation is found at Asn138 and Asn156. Ser160 is lipidated: GPI-anchor amidated serine. Residues Ser161 to Leu185 constitute a propeptide, removed in mature form.

As to quaternary structure, homomultimer; disulfide-linked. Interacts with classical and non-classical MHC class I molecules. Interacts with TNFRSF14 (via cysteine-rich domain 1); this interaction is direct. Interacts with LCK and CD247/CD3 zeta chain. Expressed in resting and activated NK cell subsets (at protein level). Expressed in resting NKT cells (at protein level). Expressed in activated CD8+ T cells (at protein level). Highly expressed in intraepithelial lymphocyte (IEL) subsets, particularly in innate-like CD8A-positive IELs (at protein level).

The protein localises to the cell membrane. The protein resides in the secreted. Functionally, receptor on immune cells capable to deliver stimulatory or inhibitory signals that regulate cell activation and differentiation. Exists as a GPI-anchored and as a transmembrane form, each likely initiating distinct signaling pathways via phosphoinositol 3-kinase in activated NK cells and via LCK and CD247/CD3 zeta chain in activated T cells. Receptor for both classical and non-classical MHC class I molecules. Receptor or ligand for TNF superfamily member TNFRSF14, participating in bidirectional cell-cell contact signaling between antigen presenting cells and lymphocytes. Upon ligation of TNFRSF14, provides stimulatory signal to NK cells enhancing IFNG production and anti-tumor immune response. On activated CD4+ T cells, interacts with TNFRSF14 and down-regulates CD28 costimulatory signaling, restricting memory and alloantigen-specific immune response. In the context of bacterial infection, acts as a ligand for TNFRSF14 on epithelial cells, triggering the production of antimicrobial proteins and pro-inflammatory cytokines. The soluble GPI-cleaved form, usually released by activated lymphocytes, might play an immune regulatory role by limiting lymphocyte effector functions. This is CD160 antigen from Mus musculus (Mouse).